We begin with the raw amino-acid sequence, 280 residues long: UPF0273 protein SSO1861 (280 aa).

Residues 2 to 246 (KRVKTYIPGL…YLKISNWSVS (245 aa)) form the KaiC domain. Position 29-36 (29-36 (GGPGTGKS)) interacts with ATP.

Belongs to the UPF0273 family.

In Saccharolobus solfataricus (strain ATCC 35092 / DSM 1617 / JCM 11322 / P2) (Sulfolobus solfataricus), this protein is UPF0273 protein SSO1861.